The sequence spans 550 residues: Solute carrier family 22 member 6 (550 aa).

Residues 1–9 (MAFNDLLQQ) are Cytoplasmic-facing. Residues 10 to 30 (VGGVGRFQQIQVTLVVLPLLL) form a helical membrane-spanning segment. Topologically, residues 31 to 135 (MASHNTLQNF…LVCSHRALRQ (105 aa)) are extracellular. 3 N-linked (GlcNAc...) asparagine glycosylation sites follow: asparagine 39, asparagine 92, and asparagine 113. The chain crosses the membrane as a helical span at residues 136-156 (LAQSLYMVGVLLGAMVFGYLA). Over 157-164 (DRLGRRKV) the chain is Cytoplasmic. The helical transmembrane segment at 165-187 (LILNYLQTAVSGTCTAFAPNFSI) threads the bilayer. The Extracellular segment spans residues 188 to 195 (YCAFRLLS). Residues 196 to 216 (GMSLAGISLNCMTLNVEWMPI) form a helical membrane-spanning segment. At 217-224 (HTRACVGT) the chain is on the cytoplasmic side. Residues 225–245 (LIGYVYSLGQFLLAGVAYAVP) traverse the membrane as a helical segment. At 246 to 248 (HWR) the chain is on the extracellular side. A helical transmembrane segment spans residues 249–269 (HLQLLVSAPFFAFFIYSWFFI). Residues 270–337 (ESARWHSSSG…ELLRCPTLRH (68 aa)) are Cytoplasmic-facing. Residues 338–358 (LFLCLSMLWFATSFAYYGLVM) traverse the membrane as a helical segment. The Extracellular segment spans residues 359 to 368 (DLQGFGVSIY). Residues 369 to 389 (LIQVIFGAVDLPAKLVGFLVI) traverse the membrane as a helical segment. At 390 to 395 (NSLGRR) the chain is on the cytoplasmic side. A helical membrane pass occupies residues 396 to 416 (PAQMAALLLAGICILLNGVIP). Topologically, residues 417–420 (QDQS) are extracellular. A helical transmembrane segment spans residues 421–444 (IVRTSLAVPGKGCLAASFNCIFLY). Residues 445–455 (TGELYPTMIRQ) are Cytoplasmic-facing. The chain crosses the membrane as a helical span at residues 456–475 (TGMGMGSTMARVGSIVSPLV). Over 476–484 (SMTAELYPS) the chain is Extracellular. A helical membrane pass occupies residues 485–505 (MPLFIYGAVPVAASAVTVLLP). At 506–550 (ETLGQPLPDTVQDLESRKGKQTRQQQEHQKYMVPLQASAQEKNGL) the chain is on the cytoplasmic side. The interval 514–550 (DTVQDLESRKGKQTRQQQEHQKYMVPLQASAQEKNGL) is disordered.

The protein belongs to the major facilitator (TC 2.A.1) superfamily. Organic cation transporter (TC 2.A.1.19) family. Post-translationally, glycosylated. Glycosylation is necessary for proper targeting of the transporter to the plasma membrane.

The protein localises to the cell membrane. The enzyme catalyses prostaglandin F2alpha(out) = prostaglandin F2alpha(in). The catalysed reaction is prostaglandin E2(out) = prostaglandin E2(in). Functionally, involved in the renal elimination of endogenous and exogenous organic anions. Functions as organic anion exchanger when the uptake of one molecule of organic anion is coupled with an efflux of one molecule of endogenous dicarboxylic acid (glutarate, ketoglutarate, etc). Mediates the transport of prostaglandin E2 (PGE2) and prostaglandin F2-alpha (PGF2-alpha) and may be involved in their renal excretion. Also mediates the sodium-independent uptake of p-aminohippurate (PAH), 2,3-dimercapto-1-propanesulfonic acid (DMPS), cidofovir, adefovir, 9-(2-phosphonylmethoxyethyl) guanine (PMEG), 9-(2-phosphonylmethoxyethyl) diaminopurine (PMEDAP), ochratoxin (OTA), acyclovir (ACV), 3'-azido-3-'deoxythymidine (AZT), cimetidine (CMD), 2,4-dichloro-phenoxyacetate (2,4-D), hippurate (HA), indoleacetate (IA), indoxyl sulfate (IS) and 3-carboxy-4-methyl-5-propyl-2-furanpropionate (CMPF) and edaravone sulfate. PAH uptake is inhibited by p-chloromercuribenzenesulphonate (PCMBS), diethyl pyrocarbonate (DEPC), indomethacin, sulindac, diclofenac, carprofen, okadaic acid, benzothiazolylcysteine (BTC), S-chlorotrifluoroethylcysteine (CTFC), cysteine S-conjugates S-dichlorovinylcysteine (DCVC), furosemide, steviol, phorbol 12-myristate 13-acetate (PMA), calcium ionophore A23187, benzylpenicillin, bumetamide, losartan, probenecid, phenol red, urate, glutarate and alpha-ketoglutarate. In Pongo abelii (Sumatran orangutan), this protein is Solute carrier family 22 member 6 (SLC22A6).